A 432-amino-acid polypeptide reads, in one-letter code: Adenylosuccinate synthetase (432 aa).

GTP is bound by residues 12-18 (GDEGKGK) and 40-42 (GHT). Residue Asp-13 is the Proton acceptor of the active site. Positions 13 and 40 each coordinate Mg(2+). IMP is bound by residues 13–16 (DEGK), 38–41 (NAGH), Thr-132, Arg-146, Gln-226, Thr-241, and Arg-305. The active-site Proton donor is the His-41. 301–307 (TVTGRKR) is a substrate binding site. Residues Arg-307, 333 to 335 (KLD), and 415 to 417 (STS) each bind GTP.

It belongs to the adenylosuccinate synthetase family. Homodimer. Mg(2+) is required as a cofactor.

Its subcellular location is the cytoplasm. It catalyses the reaction IMP + L-aspartate + GTP = N(6)-(1,2-dicarboxyethyl)-AMP + GDP + phosphate + 2 H(+). It functions in the pathway purine metabolism; AMP biosynthesis via de novo pathway; AMP from IMP: step 1/2. Its function is as follows. Plays an important role in the de novo pathway of purine nucleotide biosynthesis. Catalyzes the first committed step in the biosynthesis of AMP from IMP. In Agrobacterium fabrum (strain C58 / ATCC 33970) (Agrobacterium tumefaciens (strain C58)), this protein is Adenylosuccinate synthetase.